We begin with the raw amino-acid sequence, 233 residues long: MKAAILVFPGINRDRDMARALRLISGSEPAMVWHAETSLPAGTDLVVVPGGFSYGDYLRCGAIAARAPVMDAVRDYAAKGGLVLGVCNGFQILCESGLLPGVLMRNAQLKFICRDVHLRVERSDTPFTRGYNAGQVIRVPVAHGEGNYEADEETIQRLEGEGRVLYRYCSAEGVVDEAANINGAAHSIAGIVNDKGNVLGMMPHPENHVEDIMGCTDGRGLFAGLAQHLEKAA.

The region spanning 3 to 233 (AAILVFPGIN…GLAQHLEKAA (231 aa)) is the Glutamine amidotransferase type-1 domain. The Nucleophile role is filled by cysteine 87. Residues histidine 204 and glutamate 206 contribute to the active site.

As to quaternary structure, part of the FGAM synthase complex composed of 1 PurL, 1 PurQ and 2 PurS subunits.

The protein localises to the cytoplasm. The enzyme catalyses N(2)-formyl-N(1)-(5-phospho-beta-D-ribosyl)glycinamide + L-glutamine + ATP + H2O = 2-formamido-N(1)-(5-O-phospho-beta-D-ribosyl)acetamidine + L-glutamate + ADP + phosphate + H(+). The catalysed reaction is L-glutamine + H2O = L-glutamate + NH4(+). Its pathway is purine metabolism; IMP biosynthesis via de novo pathway; 5-amino-1-(5-phospho-D-ribosyl)imidazole from N(2)-formyl-N(1)-(5-phospho-D-ribosyl)glycinamide: step 1/2. Part of the phosphoribosylformylglycinamidine synthase complex involved in the purines biosynthetic pathway. Catalyzes the ATP-dependent conversion of formylglycinamide ribonucleotide (FGAR) and glutamine to yield formylglycinamidine ribonucleotide (FGAM) and glutamate. The FGAM synthase complex is composed of three subunits. PurQ produces an ammonia molecule by converting glutamine to glutamate. PurL transfers the ammonia molecule to FGAR to form FGAM in an ATP-dependent manner. PurS interacts with PurQ and PurL and is thought to assist in the transfer of the ammonia molecule from PurQ to PurL. This Bradyrhizobium diazoefficiens (strain JCM 10833 / BCRC 13528 / IAM 13628 / NBRC 14792 / USDA 110) protein is Phosphoribosylformylglycinamidine synthase subunit PurQ.